We begin with the raw amino-acid sequence, 332 residues long: Ketol-acid reductoisomerase (NADP(+)) (332 aa).

Positions 1-182 constitute a KARI N-terminal Rossmann domain; the sequence is MAVIYYDKDC…GSNRAGVLET (182 aa). NADP(+) contacts are provided by residues 25-28 and 83-86; these read YGAQ and DTSQ. The active site involves histidine 108. Position 134 (glycine 134) interacts with NADP(+). A KARI C-terminal knotted domain is found at 183–328; it reads TFAEETETDL…AELRSMMSWL (146 aa). Residues aspartate 191, glutamate 195, glutamate 227, and glutamate 231 each contribute to the Mg(2+) site. Residue serine 252 participates in substrate binding.

Belongs to the ketol-acid reductoisomerase family. The cofactor is Mg(2+).

The catalysed reaction is (2R)-2,3-dihydroxy-3-methylbutanoate + NADP(+) = (2S)-2-acetolactate + NADPH + H(+). It carries out the reaction (2R,3R)-2,3-dihydroxy-3-methylpentanoate + NADP(+) = (S)-2-ethyl-2-hydroxy-3-oxobutanoate + NADPH + H(+). The protein operates within amino-acid biosynthesis; L-isoleucine biosynthesis; L-isoleucine from 2-oxobutanoate: step 2/4. It functions in the pathway amino-acid biosynthesis; L-valine biosynthesis; L-valine from pyruvate: step 2/4. In terms of biological role, involved in the biosynthesis of branched-chain amino acids (BCAA). Catalyzes an alkyl-migration followed by a ketol-acid reduction of (S)-2-acetolactate (S2AL) to yield (R)-2,3-dihydroxy-isovalerate. In the isomerase reaction, S2AL is rearranged via a Mg-dependent methyl migration to produce 3-hydroxy-3-methyl-2-ketobutyrate (HMKB). In the reductase reaction, this 2-ketoacid undergoes a metal-dependent reduction by NADPH to yield (R)-2,3-dihydroxy-isovalerate. In Dehalococcoides mccartyi (strain ATCC BAA-2266 / KCTC 15142 / 195) (Dehalococcoides ethenogenes (strain 195)), this protein is Ketol-acid reductoisomerase (NADP(+)).